Reading from the N-terminus, the 383-residue chain is MKNVLPPFIEIYRALIATPSISATEESLDQSNASLITLLAGWFSDLGFNVEVQPVPGTRNKFNMLASTGHGAGGLLLTGHTDTVPFDDGRWTRDPFTLTEHDNKLYGLGTADMKGFFAFILDALRDVDVTKLKKPLYILATADEETSMAGARYFSETTALRPDCAIIGEPTSLQPIRAHKGHISNVVRVLGQSGHSSDPARGVNAIELMHDAIGHIMQLRDSLKTRYHYEAFTVPYPTLNLGHIHGGDASNRICACCELHMDIRPLPGMTLNDLNGLLNDALAPVSERWPGRLTVAELHPPIPGYECPPDHQLVEVVEKLLGTKTDVVNYCTEAPFMQTLCPTLVLGPGSINQAHQPDEYLETRFIKPTRELITQVVHHFCWH.

Histidine 80 is a binding site for Zn(2+). Aspartate 82 is an active-site residue. Aspartate 112 contributes to the Zn(2+) binding site. Glutamate 144 is a catalytic residue. Residues glutamate 145, glutamate 169, and histidine 355 each coordinate Zn(2+).

The protein belongs to the peptidase M20A family. ArgE subfamily. Homodimer. It depends on Zn(2+) as a cofactor. Co(2+) is required as a cofactor. Requires glutathione as cofactor.

The protein resides in the cytoplasm. It catalyses the reaction N(2)-acetyl-L-ornithine + H2O = L-ornithine + acetate. The protein operates within amino-acid biosynthesis; L-arginine biosynthesis; L-ornithine from N(2)-acetyl-L-ornithine (linear): step 1/1. Functionally, catalyzes the hydrolysis of the amide bond of N(2)-acetylated L-amino acids. Cleaves the acetyl group from N-acetyl-L-ornithine to form L-ornithine, an intermediate in L-arginine biosynthesis pathway, and a branchpoint in the synthesis of polyamines. This chain is Acetylornithine deacetylase, found in Salmonella heidelberg (strain SL476).